The sequence spans 238 residues: tRNA (guanine-N(7)-)-methyltransferase (238 aa).

4 residues coordinate S-adenosyl-L-methionine: E70, D95, D122, and D145. The active site involves D145. Residues K149, D181, and 216 to 219 (TKFE) each bind substrate.

The protein belongs to the class I-like SAM-binding methyltransferase superfamily. TrmB family.

It carries out the reaction guanosine(46) in tRNA + S-adenosyl-L-methionine = N(7)-methylguanosine(46) in tRNA + S-adenosyl-L-homocysteine. It participates in tRNA modification; N(7)-methylguanine-tRNA biosynthesis. Catalyzes the formation of N(7)-methylguanine at position 46 (m7G46) in tRNA. In Neisseria meningitidis serogroup B (strain ATCC BAA-335 / MC58), this protein is tRNA (guanine-N(7)-)-methyltransferase.